The primary structure comprises 923 residues: Neuropilin-1a (923 aa).

The N-terminal stretch at 1–19 (MHCGLVLILFTGIFLIVSA) is a signal peptide. Topologically, residues 20–856 (LKNDKCGDNI…AGNMLKTLDP (837 aa)) are extracellular. 3 cysteine pairs are disulfide-bonded: C25/C52, C80/C102, and C145/C171. CUB domains lie at 25–139 (CGDN…YEIF) and 145–263 (CSRN…FTVL). Residue N148 is glycosylated (N-linked (GlcNAc...) asparagine). Ca(2+)-binding residues include E193, D207, and D248. Cysteines 204 and 226 form a disulfide. N-linked (GlcNAc...) asparagine glycosylation is present at N259. Cystine bridges form between C273/C422 and C429/C581. 2 consecutive F5/8 type C domains span residues 273-422 (CTEP…VYGC) and 429-581 (CSGM…LLGC). N520 carries an N-linked (GlcNAc...) asparagine glycan. A disordered region spans residues 587-624 (TVPPTTPAASTTPSDECDDDQANCHSGTGDGYDQTGGT). Residue S612 is glycosylated (O-linked (Xyl...) (chondroitin sulfate) serine; alternate). O-linked (Xyl...) (heparan sulfate) serine; alternate glycosylation is present at S612. The 170-residue stretch at 642-811 (FACDFGWAND…DNVNMADCKD (170 aa)) folds into the MAM domain. Residues 857–877 (ILITIIAMSALGVFLGAICGV) form a helical membrane-spanning segment. Topologically, residues 878–923 (VLYCACSHSGMSDRNLSALENYNFELVDGVKLKKDKLNSQNSYSEA) are cytoplasmic.

It belongs to the neuropilin family.

Its subcellular location is the membrane. In terms of biological role, receptor involved in the development of the cardiovascular system, in angiogenesis, in the formation of certain neuronal circuits and in organogenesis outside the nervous system. It mediates the chemorepulsant activity of semaphorins. Regulates angiogenesis through a VEGF-dependent pathway. The protein is Neuropilin-1a (nrp1a) of Danio rerio (Zebrafish).